Consider the following 222-residue polypeptide: Cytidylate kinase (222 aa).

11–19 (GPSGSGKST) is a binding site for ATP.

This sequence belongs to the cytidylate kinase family. Type 1 subfamily.

It is found in the cytoplasm. The enzyme catalyses CMP + ATP = CDP + ADP. The catalysed reaction is dCMP + ATP = dCDP + ADP. In Ureaplasma urealyticum serovar 10 (strain ATCC 33699 / Western), this protein is Cytidylate kinase.